The chain runs to 231 residues: Ribosomal RNA large subunit methyltransferase E (231 aa).

S-adenosyl-L-methionine contacts are provided by Gly-76, Trp-78, Asp-99, Asp-115, and Asp-139. Lys-179 acts as the Proton acceptor in catalysis.

This sequence belongs to the class I-like SAM-binding methyltransferase superfamily. RNA methyltransferase RlmE family.

The protein localises to the cytoplasm. It catalyses the reaction uridine(2552) in 23S rRNA + S-adenosyl-L-methionine = 2'-O-methyluridine(2552) in 23S rRNA + S-adenosyl-L-homocysteine + H(+). Functionally, specifically methylates the uridine in position 2552 of 23S rRNA at the 2'-O position of the ribose in the fully assembled 50S ribosomal subunit. This chain is Ribosomal RNA large subunit methyltransferase E, found in Bradyrhizobium sp. (strain ORS 278).